We begin with the raw amino-acid sequence, 489 residues long: MSDDLPIDIHSSKLLDWLVSRRHCNKDWQKSVVAIREKIKHAILDMPESPKIVELLQGAYINYFHCCQIIEILRDTEKDTKNFLGFYSSQRMKDWQEIEGMYKKDNVYLAEAAQILQRLAQYEIPALRKQISKMDQSVTDAIRKHSEYGKQAEDGRKQFEKEISRMQLKGVHLRKELLELAADLPAFYEKITAEIRKISAARDYFQAFRDYMSLGAAPKDAAPILPIIGLIGERGLDVTTYEWKYNQKPDKVEKPNFEMLLTAAEDSDEIDFGGGDEIDFGIAAEDDAVIDFSAVVDLVADDTGAVGEAIASGQDALHLLENSEAQKAVKHELIELLAFLSMRLDDETRETTADVLIRGAEKRPDGVAAVTEKRLKTWITEVEGILKELENPQKVHLFKIRGSPQYVEQVVEELEKKRDMEHRYKRLQTLMTENQETARQSVTKSNVELKTIVESTRVLQKQIEAEISKKYNGRRVNLMGGINQALGGN.

Belongs to the CDK5RAP3 family.

Substrate adapter of E3 ligase complexes mediating ufmylation, the covalent attachment of the ubiquitin-like modifier UFM1 to substrate proteins, and which is involved in various processes, such as ribosome recycling and reticulophagy (also called ER-phagy). This Caenorhabditis elegans protein is CDK5RAP3 protein homolog.